The following is a 528-amino-acid chain: PH domain-containing protein DDB_G0267786 (528 aa).

One can recognise a PH domain in the interval 59-180 (SDVFSGYLVK…WIEIFKTCCR (122 aa)).

The protein is PH domain-containing protein DDB_G0267786 of Dictyostelium discoideum (Social amoeba).